The chain runs to 159 residues: Neuroglobin (159 aa).

In terms of domain architecture, Globin spans 3–151 (KLSEKDKELI…VVAAMSQGWA (149 aa)). Heme b contacts are provided by His66 and His98.

It belongs to the globin family. As to quaternary structure, monomer. Homodimers and homotetramers. Mainly monomeric but also detected as part of homodimers and homotetramers.

Its subcellular location is the cytoplasm. It is found in the cytosol. The protein resides in the mitochondrion matrix. The enzyme catalyses Fe(III)-heme b-[protein] + nitric oxide + H2O = Fe(II)-heme b-[protein] + nitrite + 2 H(+). Its function is as follows. Monomeric globin with a bis-histidyl six-coordinate heme-iron atom through which it can bind dioxygen, carbon monoxide and nitric oxide. Could help transport oxygen and increase its availability to the metabolically active neuronal tissues, though its low quantity in tissues as well as its high affinity for dioxygen, which may limit its oxygen-releasing ability, argue against it. The ferrous/deoxygenated form exhibits a nitrite reductase activity and it could produce nitric oxide which in turn inhibits cellular respiration in response to hypoxia. In its ferrous/deoxygenated state, it may also exhibit GDI (Guanine nucleotide Dissociation Inhibitor) activity toward heterotrimeric G-alpha proteins, thereby regulating signal transduction to facilitate neuroprotective responses in the wake of hypoxia and associated oxidative stress. The sequence is that of Neuroglobin (ngb) from Dissostichus mawsoni (Antarctic cod).